The sequence spans 768 residues: Ral guanine nucleotide dissociation stimulator-like 1 (768 aa).

Residues 65–196 form the N-terminal Ras-GEF domain; sequence KIRTIKAGTL…RAQNLLEQFQ (132 aa). A Ras-GEF domain is found at 232-501; sequence SEDLVAEQLT…YALSCEIEAA (270 aa). A Phosphoserine modification is found at Ser520. The interval 530–623 is disordered; that stretch reads PGSTPTKEQP…PPTCNNNPKI (94 aa). 2 stretches are compositionally biased toward low complexity: residues 541–561 and 586–596; these read SAAS…SCES and ESSSSCSSIHS. Polar residues predominate over residues 597–621; the sequence is MDTNSSGMSSLINPLSSPPTCNNNP. Residues 648–735 form the Ras-associating domain; the sequence is DTCIIRISVE…FDFILRKKNS (88 aa).

In terms of assembly, interacts with Ras.

Its function is as follows. Probable guanine nucleotide exchange factor. The protein is Ral guanine nucleotide dissociation stimulator-like 1 (Rgl1) of Mus musculus (Mouse).